Here is a 543-residue protein sequence, read N- to C-terminus: Biotinidase (543 aa).

The first 41 residues, 1-41 (MAHAHIQGGRRAKSRFVVCIMSGARSKLALFLCGCYVVALG), serve as a signal peptide directing secretion. The CN hydrolase domain maps to 72–351 (NPLALISRQE…VGLIGAENAT (280 aa)). The active-site Proton acceptor is glutamate 112. A glycan (N-linked (GlcNAc...) asparagine) is linked at asparagine 119. Asparagine 150 is a glycosylation site (N-linked (GlcNAc...) (complex) asparagine). N-linked (GlcNAc...) asparagine glycosylation is present at asparagine 203. Catalysis depends on lysine 212, which acts as the Proton donor. The active-site Nucleophile is the cysteine 245. N-linked (GlcNAc...) asparagine glycosylation is found at asparagine 349, asparagine 402, and asparagine 489.

This sequence belongs to the carbon-nitrogen hydrolase superfamily. BTD/VNN family.

Its subcellular location is the secreted. The protein resides in the extracellular space. The catalysed reaction is biocytin + H2O = biotin + L-lysine. It catalyses the reaction biotin amide + H2O = biotin + NH4(+). Its function is as follows. Catalytic release of biotin from biocytin, the product of biotin-dependent carboxylases degradation. This Homo sapiens (Human) protein is Biotinidase.